The following is a 174-amino-acid chain: NADH-ubiquinone oxidoreductase chain 6 (174 aa).

Helical transmembrane passes span 1-21 (MTYVLFLLSVGLVMGFVGFSS), 24-44 (SPIYGGLVLIVSGVVGCAIIL), 47-67 (GGGYMGLMVFLIYLGGMMVVF), 86-106 (VEVLVSVLVGLAMEVGLVLWV), and 151-171 (WLVVVTGWTLFVGVYIVIEIA).

It belongs to the complex I subunit 6 family. As to quaternary structure, core subunit of respiratory chain NADH dehydrogenase (Complex I) which is composed of 45 different subunits.

Its subcellular location is the mitochondrion inner membrane. It carries out the reaction a ubiquinone + NADH + 5 H(+)(in) = a ubiquinol + NAD(+) + 4 H(+)(out). Core subunit of the mitochondrial membrane respiratory chain NADH dehydrogenase (Complex I) which catalyzes electron transfer from NADH through the respiratory chain, using ubiquinone as an electron acceptor. Essential for the catalytic activity and assembly of complex I. This Gorilla gorilla gorilla (Western lowland gorilla) protein is NADH-ubiquinone oxidoreductase chain 6 (MT-ND6).